A 1343-amino-acid polypeptide reads, in one-letter code: DNA-directed RNA polymerase subunit beta (1343 aa).

This sequence belongs to the RNA polymerase beta chain family. In terms of assembly, the RNAP catalytic core consists of 2 alpha, 1 beta, 1 beta' and 1 omega subunit. When a sigma factor is associated with the core the holoenzyme is formed, which can initiate transcription.

It carries out the reaction RNA(n) + a ribonucleoside 5'-triphosphate = RNA(n+1) + diphosphate. DNA-dependent RNA polymerase catalyzes the transcription of DNA into RNA using the four ribonucleoside triphosphates as substrates. The sequence is that of DNA-directed RNA polymerase subunit beta from Shewanella piezotolerans (strain WP3 / JCM 13877).